We begin with the raw amino-acid sequence, 160 residues long: Protein cornichon homolog 2 (160 aa).

At 1–10 the chain is on the cytoplasmic side; that stretch reads MAFTFAAFCY. The chain crosses the membrane as a helical span at residues 11–31; sequence MLTLVLCASLIFFVIWHIIAF. The Lumenal segment spans residues 32–72; the sequence is DELRTDFKNPIDQGNPARARERLKNIERICCLLRKLVVPEY. The helical transmembrane segment at 73 to 93 threads the bilayer; the sequence is CIHGLFCLMFLCAAEWVTLGL. Topologically, residues 94-138 are cytoplasmic; it reads NLPLLLYHLWRYFHRPSDGSEGLFDAVSIMDADILGYCQKEAWCK. Residues 139–159 traverse the membrane as a helical segment; the sequence is LAFYLLSFFYYLYSMVYTLVS. A topological domain (lumenal) is located at residue Phe-160.

This sequence belongs to the cornichon family. As to quaternary structure, interacts with HBEGF. As to expression, expressed in the odd-numbered neuromeres (r3 and r5) of the developing hindbrain.

It localises to the membrane. Functionally, regulates the trafficking and gating properties of AMPA-selective glutamate receptors (AMPARs). Plays an important role in the proper development of cranial nerves by facilitating the secretion of HBEGF. This chain is Protein cornichon homolog 2 (CNIH2), found in Gallus gallus (Chicken).